The sequence spans 807 residues: MFCRKYAFQTWKQFSRFYSAVNNIRASKTRNIGIIAHIDAGKTTTTERMIYYSGKIKRIGNVDEGDTVTDYLPSERERGITIQSAAITLPWNQHKINIIDTPGHADFTFEVIRSLRVLDGAVTILDAVAGVEAQTEKVWKQASSLNLPKIVYVNKMDRPGAGFSRTVQEVIQKLETRVVLCNLPYFETNKESDLEFKGVIDVIHQKLLKWNEMDANGNEISVVDIDKTTPELLQILEKSRESMVETLGEYDERIIDSFLEHDENYLKIPPILLDQVIRKATIDNYLTPVFCGASFRNIGVQPLMDGITKYLPSPLETSLPEITKNGKEVPKKADDEKGLVVANDNNLTLALAFKVMTHSTRGPMTFVRVYSGKLNAASNLINTRTGKKLLIRKLLVMHGDSPEEVKSISAGNIGVIPGYETDFQTGDTLVSSAVAKRNFTAKDSAYRLLPIDIPPPLFNAAIEPHTAGDEAYMKQCVETLIREDPSLKVHLDEEMGQVVLSGMGELHLDIVRERLVNDMKAKVNLKDVVVSYKESYVGKKEKEAVITDEEIEVVVTLSHTEDARDYIGQEGALVIEGDNNVILLSQTALSEHVQATIDERRWKCENNLEELKEAILNGCLTALQMGGPILGFPLHSTLVTVKRWNAPVEQAQEQALNLMNASRQAVQSLKNEEKDFSILEPIMSIKVYVDSNDLGEVSHDLTQRCKAMIVEIQDQSTQNLETAAWAKDEATKVYVPPDYTIKKNVSKFDDIANKKIIVAETPLREMIGYLSKLRALTQGRATFDMTLIGMRRAVGNRVDSIVEEYKF.

The N-terminal 18 residues, 1–18 (MFCRKYAFQTWKQFSRFY), are a transit peptide targeting the mitochondrion. The region spanning 27-315 (SKTRNIGIIA…GITKYLPSPL (289 aa)) is the tr-type G domain. GTP is bound by residues 36 to 43 (AHIDAGKT), 100 to 104 (DTPGH), and 154 to 157 (NKMD).

The protein belongs to the TRAFAC class translation factor GTPase superfamily. Classic translation factor GTPase family. EF-G/EF-2 subfamily.

The protein resides in the mitochondrion. Mitochondrial GTPase that mediates the disassembly of ribosomes from messenger RNA at the termination of mitochondrial protein biosynthesis. Not involved in the GTP-dependent ribosomal translocation step during translation elongation. The polypeptide is Ribosome-releasing factor 2, mitochondrial (Candida dubliniensis (strain CD36 / ATCC MYA-646 / CBS 7987 / NCPF 3949 / NRRL Y-17841) (Yeast)).